The primary structure comprises 297 residues: 4-diphosphocytidyl-2-C-methyl-D-erythritol kinase (297 aa).

Residue lysine 10 is part of the active site. 94–104 (PVAAGLAGGSS) lines the ATP pocket. The active site involves aspartate 136.

This sequence belongs to the GHMP kinase family. IspE subfamily.

The enzyme catalyses 4-CDP-2-C-methyl-D-erythritol + ATP = 4-CDP-2-C-methyl-D-erythritol 2-phosphate + ADP + H(+). It participates in isoprenoid biosynthesis; isopentenyl diphosphate biosynthesis via DXP pathway; isopentenyl diphosphate from 1-deoxy-D-xylulose 5-phosphate: step 3/6. Its function is as follows. Catalyzes the phosphorylation of the position 2 hydroxy group of 4-diphosphocytidyl-2C-methyl-D-erythritol. This chain is 4-diphosphocytidyl-2-C-methyl-D-erythritol kinase, found in Shouchella clausii (strain KSM-K16) (Alkalihalobacillus clausii).